Here is a 331-residue protein sequence, read N- to C-terminus: tRNA N6-adenosine threonylcarbamoyltransferase (331 aa).

Fe cation is bound by residues histidine 109, histidine 113, and tyrosine 130. Residues 130 to 134, aspartate 162, aspartate 183, and serine 262 contribute to the substrate site; that span reads YLSGG. Residue aspartate 290 participates in Fe cation binding.

Belongs to the KAE1 / TsaD family. The cofactor is Fe(2+).

The protein resides in the cytoplasm. The enzyme catalyses L-threonylcarbamoyladenylate + adenosine(37) in tRNA = N(6)-L-threonylcarbamoyladenosine(37) in tRNA + AMP + H(+). Required for the formation of a threonylcarbamoyl group on adenosine at position 37 (t(6)A37) in tRNAs that read codons beginning with adenine. Is probably involved in the transfer of the threonylcarbamoyl moiety of threonylcarbamoyl-AMP (TC-AMP) to the N6 group of A37. The protein is tRNA N6-adenosine threonylcarbamoyltransferase of Saccharolobus islandicus (strain Y.G.57.14 / Yellowstone #1) (Sulfolobus islandicus).